Reading from the N-terminus, the 253-residue chain is Imidazole glycerol phosphate synthase subunit HisF (253 aa).

Residues aspartate 11 and aspartate 130 contribute to the active site.

It belongs to the HisA/HisF family. As to quaternary structure, heterodimer of HisH and HisF.

It localises to the cytoplasm. It catalyses the reaction 5-[(5-phospho-1-deoxy-D-ribulos-1-ylimino)methylamino]-1-(5-phospho-beta-D-ribosyl)imidazole-4-carboxamide + L-glutamine = D-erythro-1-(imidazol-4-yl)glycerol 3-phosphate + 5-amino-1-(5-phospho-beta-D-ribosyl)imidazole-4-carboxamide + L-glutamate + H(+). It participates in amino-acid biosynthesis; L-histidine biosynthesis; L-histidine from 5-phospho-alpha-D-ribose 1-diphosphate: step 5/9. IGPS catalyzes the conversion of PRFAR and glutamine to IGP, AICAR and glutamate. The HisF subunit catalyzes the cyclization activity that produces IGP and AICAR from PRFAR using the ammonia provided by the HisH subunit. In Opitutus terrae (strain DSM 11246 / JCM 15787 / PB90-1), this protein is Imidazole glycerol phosphate synthase subunit HisF.